The primary structure comprises 277 residues: Probable enoyl-CoA hydratase, mitochondrial (277 aa).

The N-terminal 42 residues, 1–42 (MLKQVIKTVSSSQAPKKYFFKQFCTSTTEKKGRVGLVTLNRP), are a transit peptide targeting the mitochondrion. Substrate is bound by residues 85 to 88 (ADIK) and glycine 128.

The protein belongs to the enoyl-CoA hydratase/isomerase family. In terms of assembly, homohexamer; dimer of trimers.

The protein localises to the mitochondrion matrix. It carries out the reaction a (3S)-3-hydroxyacyl-CoA = a (2E)-enoyl-CoA + H2O. It catalyses the reaction a 4-saturated-(3S)-3-hydroxyacyl-CoA = a (3E)-enoyl-CoA + H2O. The enzyme catalyses (3S)-3-hydroxybutanoyl-CoA = (2E)-butenoyl-CoA + H2O. The catalysed reaction is 3-hydroxyisovaleryl-CoA = 3-methylbut-2-enoyl-CoA + H2O. It carries out the reaction 3-hydroxypropanoyl-CoA = acryloyl-CoA + H2O. It catalyses the reaction 3-hydroxybutanoyl-CoA = (2E)-butenoyl-CoA + H2O. It participates in lipid metabolism; fatty acid beta-oxidation. Functionally, straight-chain enoyl-CoA thioesters from C4 up to at least C16 are processed, although with decreasing catalytic rate. The chain is Probable enoyl-CoA hydratase, mitochondrial (echs1) from Dictyostelium discoideum (Social amoeba).